The sequence spans 2571 residues: Stabilin-1 (2571 aa).

Positions 1–25 (MAEPRTLLLLCVLVLCLSDSSFIRG) are cleaved as a signal peptide. At 26-2475 (QTVRSKRCDI…RAVLGSEPPP (2450 aa)) the chain is on the extracellular side. 4 consecutive EGF-like domains span residues 111–149 (FECP…SVCQ), 157–194 (FGPD…PHCD), 196–232 (ELPV…NVCL), and 233–272 (APDP…KVCL). Cystine bridges form between Cys-113/Cys-127, Cys-121/Cys-137, Cys-139/Cys-148, Cys-161/Cys-172, Cys-165/Cys-182, Cys-184/Cys-193, Cys-200/Cys-211, Cys-205/Cys-218, Cys-220/Cys-231, Cys-237/Cys-248, Cys-242/Cys-258, and Cys-260/Cys-271. N-linked (GlcNAc...) asparagine glycans are attached at residues Asn-134 and Asn-142. N-linked (GlcNAc...) asparagine glycosylation is found at Asn-287, Asn-313, Asn-416, Asn-607, Asn-674, Asn-713, and Asn-746. FAS1 domains are found at residues 357 to 495 (YGHL…TALR) and 507 to 642 (KKTV…EGIL). In terms of domain architecture, EGF-like 5 spans 729–769 (DCTQCPGGFSNPCYGKGNCSDGVRGNGACLCFPDYKGIACH). 3 cysteine pairs are disulfide-bonded: Cys-733–Cys-747, Cys-741–Cys-757, and Cys-759–Cys-768. N-linked (GlcNAc...) asparagine glycosylation occurs at Asn-817. 4 consecutive EGF-like domains span residues 819-859 (SMGN…NGFS), 862-904 (RSNP…RICV), 905-947 (AIDE…YECS), and 948-987 (PIDP…DGFS). Disulfide bonds link Cys-823–Cys-838, Cys-832–Cys-847, Cys-866–Cys-880, Cys-874–Cys-890, Cys-892–Cys-903, Cys-909–Cys-923, Cys-917–Cys-933, Cys-935–Cys-946, Cys-952–Cys-965, and Cys-959–Cys-975. FAS1 domains are found at residues 989–1119 (YGDI…SQVL) and 1129–1254 (GPGL…SGIL). N-linked (GlcNAc...) asparagine glycans are attached at residues Asn-1011, Asn-1088, Asn-1097, Asn-1171, Asn-1179, Asn-1223, and Asn-1275. In terms of domain architecture, Laminin EGF-like 1 spans 1328-1393 (TLCEPCPGGL…CDCDHGLCQE (66 aa)). Disulfide bonds link Cys-1333–Cys-1347, Cys-1341–Cys-1357, Cys-1359–Cys-1368, Cys-1380–Cys-1391, Cys-1384–Cys-1401, Cys-1403–Cys-1412, Cys-1421–Cys-1431, Cys-1425–Cys-1441, Cys-1443–Cys-1454, Cys-1460–Cys-1473, Cys-1467–Cys-1483, Cys-1485–Cys-1496, Cys-1502–Cys-1515, Cys-1509–Cys-1525, Cys-1527–Cys-1539, Cys-1545–Cys-1558, Cys-1552–Cys-1568, and Cys-1570–Cys-1582. Asn-1398 carries N-linked (GlcNAc...) asparagine glycosylation. EGF-like domains lie at 1417-1455 (TDHQ…SYCS), 1456-1497 (EVDP…ELCQ), 1498-1540 (EINS…QTCK), and 1541-1583 (LLDP…ITCH). Asn-1450 and Asn-1472 each carry an N-linked (GlcNAc...) asparagine glycan. 2 consecutive FAS1 domains span residues 1583 to 1709 (HGRV…DHVL) and 1725 to 1865 (PQRN…DQLL). N-linked (GlcNAc...) asparagine glycans are attached at residues Asn-1627 and Asn-1728. A Laminin EGF-like 2 domain is found at 1966–2031 (INCHACPGGP…RCTQHGRCDE (66 aa)). Cystine bridges form between Cys-1971/Cys-1985, Cys-1979/Cys-1995, Cys-1997/Cys-2006, Cys-2018/Cys-2029, Cys-2023/Cys-2039, Cys-2041/Cys-2050, Cys-2060/Cys-2070, Cys-2064/Cys-2076, Cys-2078/Cys-2089, Cys-2095/Cys-2108, Cys-2102/Cys-2117, Cys-2119/Cys-2130, Cys-2136/Cys-2150, Cys-2144/Cys-2160, Cys-2162/Cys-2173, Cys-2230/Cys-2299, and Cys-2254/Cys-2275. EGF-like domains lie at 2056–2090 (LQPV…RVCT), 2091–2131 (VADL…WSCR), and 2132–2174 (ARDP…LQCL). Asn-2107 carries N-linked (GlcNAc...) asparagine glycosylation. The region spanning 2208–2301 (GVFHIQATSG…SELWDAYCYR (94 aa)) is the Link domain. N-linked (GlcNAc...) asparagine glycans are attached at residues Asn-2261, Asn-2290, Asn-2334, Asn-2347, Asn-2379, Asn-2393, Asn-2400, and Asn-2424. Residues 2322–2459 (NGKLLDVLAA…GIIHALASPL (138 aa)) form the FAS1 7 domain. A helical membrane pass occupies residues 2476-2496 (VALSLGVVVTSGTLLGLVAGA). Residues 2497-2571 (LYLRARGKPP…PDTQRVLKVK (75 aa)) are Cytoplasmic-facing.

As to quaternary structure, interacts with CHID1.

Its subcellular location is the membrane. Functionally, acts as a scavenger receptor for acetylated low density lipoprotein. Binds to both Gram-positive and Gram-negative bacteria and may play a role in defense against bacterial infection. When inhibited in endothelial tube formation assays, there is a marked decrease in cell-cell interactions, suggesting a role in angiogenesis. Involved in the delivery of newly synthesized CHID1/SI-CLP from the biosynthetic compartment to the endosomal/lysosomal system. The protein is Stabilin-1 (Stab1) of Mus musculus (Mouse).